A 537-amino-acid chain; its full sequence is MAAAAADLVIGWCIFGLLLLAILAFCWVYVRKYQSQRESEVVSTVTAIFSLAVALITSALLPVDIFLVSYMKNQNGTFKDWANANVTVQIENTVLYGYYTLYSVILFCVFFWIPFVYFYYEEKDDDDTSKCTQVKTALKYTLGFVVICALLLLVGAFVPLNLPNNNNSTEWEKVKLLFEDLGTGQGLAALSFSISSLTLIGMLAAITYTAYGMSALPLNLIKGTRSTAYERLENTEDIEEVEQHIQTIRSKSKDGRPLSARDRRTLKQCEERLRTLRKRERHLEFIENSWWTKFCGALRPLKIIWGIFFILVALLFVISLFLSNLDKALHSAGIDSGFIVFGTNLSNPLNMLLPLLQTVFPLDYILITIIIMYFIFTSMAGIRNIGIWFFWIRLYKIRRGRTRPQALLFLCMILLLIVLHTSYMIYSLAPQYVMYGSQNYLIESNITSDAHKGNSTLAVPKRCDADAPKDQCTVTRTYVFLHKFWFFSAAYYFGNWAFLVVFLIGLIVSCCKGKKSVIEGVDEDSDLSDDEPSAYSA.

Residues 1–7 (MAAAAAD) lie on the Extracellular side of the membrane. A helical transmembrane segment spans residues 8–28 (LVIGWCIFGLLLLAILAFCWV). At 29–47 (YVRKYQSQRESEVVSTVTA) the chain is on the cytoplasmic side. A helical membrane pass occupies residues 48–68 (IFSLAVALITSALLPVDIFLV). Residues 69–97 (SYMKNQNGTFKDWANANVTVQIENTVLYG) are Extracellular-facing. Residues asparagine 75 and asparagine 85 are each glycosylated (N-linked (GlcNAc...) asparagine). Residues 98-118 (YYTLYSVILFCVFFWIPFVYF) form a helical membrane-spanning segment. Over 119–141 (YYEEKDDDDTSKCTQVKTALKYT) the chain is Cytoplasmic. The chain crosses the membrane as a helical span at residues 142–162 (LGFVVICALLLLVGAFVPLNL). At 163–185 (PNNNNSTEWEKVKLLFEDLGTGQ) the chain is on the extracellular side. N-linked (GlcNAc...) asparagine glycosylation is found at asparagine 166 and asparagine 167. A helical membrane pass occupies residues 186-206 (GLAALSFSISSLTLIGMLAAI). The Cytoplasmic segment spans residues 207 to 302 (TYTAYGMSAL…KFCGALRPLK (96 aa)). The short motif at 229–232 (YERL) is the YERL motif; mediates interaction with adapter protein complex 2 and is essential for its function in clathrin-mediated endocytosis of INSR element. Phosphothreonine is present on threonine 235. Residues 291–294 (WTKF) carry the WTKF motif; mediates interaction with adapter protein complex 2 and is essential for its function in clathrin-mediated endocytosis of INSR motif. A helical transmembrane segment spans residues 303-323 (IIWGIFFILVALLFVISLFLS). Residues 324–361 (NLDKALHSAGIDSGFIVFGTNLSNPLNMLLPLLQTVFP) lie on the Extracellular side of the membrane. Asparagine 344 is a glycosylation site (N-linked (GlcNAc...) asparagine). A helical transmembrane segment spans residues 362–382 (LDYILITIIIMYFIFTSMAGI). Residues 383 to 405 (RNIGIWFFWIRLYKIRRGRTRPQ) are Cytoplasmic-facing. The chain crosses the membrane as a helical span at residues 406–426 (ALLFLCMILLLIVLHTSYMIY). The Extracellular segment spans residues 427–483 (SLAPQYVMYGSQNYLIESNITSDAHKGNSTLAVPKRCDADAPKDQCTVTRTYVFLHK). Residues asparagine 445 and asparagine 454 are each glycosylated (N-linked (GlcNAc...) asparagine). Residues 484–504 (FWFFSAAYYFGNWAFLVVFLI) form a helical membrane-spanning segment. The Cytoplasmic portion of the chain corresponds to 505–537 (GLIVSCCKGKKSVIEGVDEDSDLSDDEPSAYSA). 2 positions are modified to phosphoserine: serine 525 and serine 528.

This sequence belongs to the LIMR family. LMBRD1 subfamily. In terms of assembly, interacts with ABCD4; this interaction induces the translocation of ABCD4 from the endoplasmic reticulum to the lysosome. Interacts with ABCD4 and MMACHC; this interaction ensures the transport of cobalamin from the lysosome to the cytoplasm. Interacts with INSR, adapter protein complex 2 and clathrin heavy chain. N-glycosylated.

It is found in the endoplasmic reticulum membrane. It localises to the lysosome membrane. The protein resides in the cell membrane. The protein localises to the cytoplasmic vesicle. Its subcellular location is the clathrin-coated vesicle. Its function is as follows. Lysosomal membrane chaperone required to export cobalamin (vitamin B12) from the lysosome to the cytosol, allowing its conversion to cofactors. Targets ABCD4 transporter from the endoplasmic reticulum to the lysosome. Then forms a complex with lysosomal ABCD4 and cytoplasmic MMACHC to transport cobalamin across the lysosomal membrane. Acts as an adapter protein which plays an important role in mediating and regulating the internalization of the insulin receptor (INSR). Involved in clathrin-mediated endocytosis of INSR via its interaction with adapter protein complex 2. Essential for the initiation of gastrulation and early formation of mesoderm structures during embryogenesis. This is Lysosomal cobalamin transport escort protein LMBD1 (Lmbrd1) from Rattus norvegicus (Rat).